The chain runs to 339 residues: NADH-quinone oxidoreductase subunit H (339 aa).

Transmembrane regions (helical) follow at residues 19 to 39 (LLKI…LTLA), 87 to 107 (FLLG…VVPF), 120 to 140 (LLYI…AGWA), 153 to 173 (SAAQ…GVLM), 191 to 211 (FWEW…ISAV), 253 to 273 (ILVA…PVPF), 275 to 295 (PDSI…FLWF), and 310 to 330 (LGWK…GAMM).

Belongs to the complex I subunit 1 family. NDH-1 is composed of 14 different subunits. Subunits NuoA, H, J, K, L, M, N constitute the membrane sector of the complex.

It is found in the cell inner membrane. It carries out the reaction a quinone + NADH + 5 H(+)(in) = a quinol + NAD(+) + 4 H(+)(out). In terms of biological role, NDH-1 shuttles electrons from NADH, via FMN and iron-sulfur (Fe-S) centers, to quinones in the respiratory chain. The immediate electron acceptor for the enzyme in this species is believed to be ubiquinone. Couples the redox reaction to proton translocation (for every two electrons transferred, four hydrogen ions are translocated across the cytoplasmic membrane), and thus conserves the redox energy in a proton gradient. This subunit may bind ubiquinone. The protein is NADH-quinone oxidoreductase subunit H of Methylobacillus flagellatus (strain ATCC 51484 / DSM 6875 / VKM B-1610 / KT).